The chain runs to 181 residues: Cyclic AMP-dependent transcription factor ATF-3 (181 aa).

Residues 76–96 (VTKSEVAPEEDERKRRRRERN) form a disordered region. Residue Lys-78 forms a Glycyl lysine isopeptide (Lys-Gly) (interchain with G-Cter in SUMO2) linkage. The region spanning 86-149 (DERKRRRRER…QHLIYMLNLH (64 aa)) is the bZIP domain. The tract at residues 88–110 (RKRRRRERNKIAAAKCRNKKKEK) is basic motif. Residues 114-142 (LQKESEKLESVNAELKAQIEELKNEKQHL) form a leucine-zipper region. The residue at position 162 (Thr-162) is a Phosphothreonine. A Glycyl lysine isopeptide (Lys-Gly) (interchain with G-Cter in SUMO2) cross-link involves residue Lys-175.

It belongs to the bZIP family. ATF subfamily. As to quaternary structure, ATF3 alone can bind DNA, but it preferentially forms heteromeric complexes with JUN and JUNB and does not interact with FOS. Expressed in tissues containing skeletal muscle or smooth muscle. Expressed in cutaneous and muscular sensory neurons.

The protein localises to the nucleus. This protein binds the cAMP response element (CRE) (consensus: 5'-GTGACGT[AC][AG]-3'), a sequence present in many viral and cellular promoters. Represses transcription from promoters with ATF sites. It may repress transcription by stabilizing the binding of inhibitory cofactors at the promoter. The sequence is that of Cyclic AMP-dependent transcription factor ATF-3 (Atf3) from Rattus norvegicus (Rat).